The chain runs to 214 residues: RING-H2 finger protein ATL67 (214 aa).

Residues 33-53 (LGFGYSIAIALGFLVLLSTVL) form a helical membrane-spanning segment. The RING-type; atypical zinc-finger motif lies at 138-180 (CSICLCEYKEAEMLRMMPECKHYFHLCCLDAWLKLNGSCPVCR).

The protein belongs to the RING-type zinc finger family. ATL subfamily.

It is found in the membrane. It carries out the reaction S-ubiquitinyl-[E2 ubiquitin-conjugating enzyme]-L-cysteine + [acceptor protein]-L-lysine = [E2 ubiquitin-conjugating enzyme]-L-cysteine + N(6)-ubiquitinyl-[acceptor protein]-L-lysine.. The protein operates within protein modification; protein ubiquitination. In Arabidopsis thaliana (Mouse-ear cress), this protein is RING-H2 finger protein ATL67 (ATL67).